We begin with the raw amino-acid sequence, 188 residues long: Phosphatidylcholine-sterol acyltransferase (188 aa).

Asparagine 20 is a glycosylation site (N-linked (GlcNAc...) asparagine). Histidine 169 acts as the Charge relay system in catalysis.

The protein belongs to the AB hydrolase superfamily. Lipase family. As to expression, detected in blood plasma (at protein level).

It localises to the secreted. It catalyses the reaction a sterol + a 1,2-diacyl-sn-glycero-3-phosphocholine = a sterol ester + a 1-acyl-sn-glycero-3-phosphocholine. The catalysed reaction is a 1-O-alkyl-2-acetyl-sn-glycero-3-phosphocholine + H2O = a 1-O-alkyl-sn-glycero-3-phosphocholine + acetate + H(+). The enzyme catalyses a 1-hexadecanoyl-2-acyl-sn-glycero-3-phosphocholine + (24S)-hydroxycholesterol = (24S)-24-hydroxycholesterol ester + 1-hexadecanoyl-sn-glycero-3-phosphocholine. It carries out the reaction (24S)-hydroxycholesterol + 1-hexadecanoyl-2-(9Z,12Z-octadecadienoyl)-sn-glycero-3-phosphocholine = (24S)-hydroxycholesterol 3-linoleoate + 1-hexadecanoyl-sn-glycero-3-phosphocholine. It catalyses the reaction 1-hexadecanoyl-2-(5Z,8Z,11Z,14Z-eicosatetraenoyl)-sn-glycero-3-phosphocholine + cholesterol = cholesteryl (5Z,8Z,11Z,14Z)-eicosatetraenoate + 1-hexadecanoyl-sn-glycero-3-phosphocholine. The catalysed reaction is 1-hexadecanoyl-2-(9Z-octadecenoyl)-sn-glycero-3-phosphocholine + cholesterol = cholesteryl (9Z-octadecenoate) + 1-hexadecanoyl-sn-glycero-3-phosphocholine. The enzyme catalyses 1-hexadecanoyl-2-(8Z,11Z,14Z-eicosatrienoyl)-sn-glycero-3-phosphocholine + cholesterol = cholesteryl (8Z,11Z,14Z)-eicosatrienoate + 1-hexadecanoyl-sn-glycero-3-phosphocholine. It carries out the reaction 1-hexadecanoyl-2-(5Z,8Z,11Z-eicosatrienoyl)-sn-glycero-3-phosphocholine + cholesterol = cholesteryl (5Z,8Z,11Z)-eicosatrienoate + 1-hexadecanoyl-sn-glycero-3-phosphocholine. It catalyses the reaction 1-hexadecanoyl-2-(5Z,8Z,11Z,14Z,17Z-eicosapentaenoyl)-sn-glycero-3-phosphocholine + cholesterol = (5Z,8Z,11Z,14Z,17Z-eicosapentaenoyl)-cholesterol + 1-hexadecanoyl-sn-glycero-3-phosphocholine. The catalysed reaction is 1-hexadecanoyl-2-(9Z,12Z-octadecadienoyl)-sn-glycero-3-phosphocholine + cholesterol = cholesteryl (9Z,12Z)-octadecadienoate + 1-hexadecanoyl-sn-glycero-3-phosphocholine. The enzyme catalyses 1-hexadecanoyl-2-(6Z,9Z,12Z-octadecatrienoyl)-sn-glycero-3-phosphocholine + cholesterol = (6Z,9Z,12Z-octadecatrienoyl)-cholesterol + 1-hexadecanoyl-sn-glycero-3-phosphocholine. It carries out the reaction 1-hexadecanoyl-2-(11Z,14Z,17Z-eicosatrienoyl)-sn-glycero-3-phosphocholine + cholesterol = (11Z,14Z,17Z-eicosatrienoyl)-cholesterol + 1-hexadecanoyl-sn-glycero-3-phosphocholine. It catalyses the reaction 1-hexadecanoyl-2-(9Z,12Z,15Z-octadecatrienoyl)-sn-glycero-3-phosphocholine + cholesterol = (9Z,12Z,15Z-octadecatrienoyl)-cholesterol + 1-hexadecanoyl-sn-glycero-3-phosphocholine. The catalysed reaction is 1-hexadecanoyl-2-(9Z,12Z-octadecadienoyl)-sn-glycero-3-phosphocholine + H2O = (9Z,12Z)-octadecadienoate + 1-hexadecanoyl-sn-glycero-3-phosphocholine + H(+). The enzyme catalyses 1-hexadecanoyl-2-(5Z,8Z,11Z,14Z-eicosatetraenoyl)-sn-glycero-3-phosphocholine + H2O = 1-hexadecanoyl-sn-glycero-3-phosphocholine + (5Z,8Z,11Z,14Z)-eicosatetraenoate + H(+). It carries out the reaction a 1-O-alkyl-2-acetyl-sn-glycero-3-phosphocholine + 1-hexadecanoyl-sn-glycero-3-phosphocholine = 1-hexadecanoyl-2-acetyl-sn-glycero-3-phosphocholine + a 1-O-alkyl-sn-glycero-3-phosphocholine. Functionally, central enzyme in the extracellular metabolism of plasma lipoproteins. Synthesized mainly in the liver and secreted into plasma where it converts cholesterol and phosphatidylcholines (lecithins) to cholesteryl esters and lysophosphatidylcholines on the surface of high and low density lipoproteins (HDLs and LDLs). The cholesterol ester is then transported back to the liver. Also produced in the brain by primary astrocytes, and esterifies free cholesterol on nascent APOE-containing lipoproteins secreted from glia and influences cerebral spinal fluid (CSF) APOE- and APOA1 levels. Together with APOE and the cholesterol transporter ABCA1, plays a key role in the maturation of glial-derived, nascent lipoproteins. Required for remodeling high-density lipoprotein particles into their spherical forms. Has a preference for plasma 16:0-18:2 or 18:O-18:2 phosphatidylcholines. Catalyzes the hydrolysis of 1-O-alkyl-2-acetyl-sn-glycero-3-phosphocholine (platelet-activating factor or PAF) to 1-O-alkyl-sn-glycero-3-phosphocholine (lyso-PAF). Also catalyzes the transfer of the acetate group from PAF to 1-hexadecanoyl-sn-glycero-3-phosphocholine forming lyso-PAF. Catalyzes the esterification of (24S)-hydroxycholesterol (24(S)OH-C), also known as cerebrosterol to produce 24(S)OH-C monoesters. This chain is Phosphatidylcholine-sterol acyltransferase (LCAT), found in Sus scrofa (Pig).